The following is a 440-amino-acid chain: 3-phosphoshikimate 1-carboxyvinyltransferase (440 aa).

3-phosphoshikimate contacts are provided by lysine 19, serine 20, and arginine 24. Lysine 19 contributes to the phosphoenolpyruvate binding site. Positions 92 and 121 each coordinate phosphoenolpyruvate. The 3-phosphoshikimate site is built by serine 166, glutamine 168, aspartate 315, and lysine 342. Glutamine 168 contributes to the phosphoenolpyruvate binding site. Aspartate 315 functions as the Proton acceptor in the catalytic mechanism. Positions 346 and 399 each coordinate phosphoenolpyruvate.

The protein belongs to the EPSP synthase family. As to quaternary structure, monomer.

It localises to the cytoplasm. It carries out the reaction 3-phosphoshikimate + phosphoenolpyruvate = 5-O-(1-carboxyvinyl)-3-phosphoshikimate + phosphate. It participates in metabolic intermediate biosynthesis; chorismate biosynthesis; chorismate from D-erythrose 4-phosphate and phosphoenolpyruvate: step 6/7. Its function is as follows. Catalyzes the transfer of the enolpyruvyl moiety of phosphoenolpyruvate (PEP) to the 5-hydroxyl of shikimate-3-phosphate (S3P) to produce enolpyruvyl shikimate-3-phosphate and inorganic phosphate. The polypeptide is 3-phosphoshikimate 1-carboxyvinyltransferase (Leptospira interrogans serogroup Icterohaemorrhagiae serovar Lai (strain 56601)).